The following is a 444-amino-acid chain: Methylenetetrahydrofolate--tRNA-(uracil-5-)-methyltransferase TrmFO (444 aa).

10–15 is a binding site for FAD; the sequence is GAGLAG.

It belongs to the MnmG family. TrmFO subfamily. The cofactor is FAD.

The protein resides in the cytoplasm. The catalysed reaction is uridine(54) in tRNA + (6R)-5,10-methylene-5,6,7,8-tetrahydrofolate + NADH + H(+) = 5-methyluridine(54) in tRNA + (6S)-5,6,7,8-tetrahydrofolate + NAD(+). The enzyme catalyses uridine(54) in tRNA + (6R)-5,10-methylene-5,6,7,8-tetrahydrofolate + NADPH + H(+) = 5-methyluridine(54) in tRNA + (6S)-5,6,7,8-tetrahydrofolate + NADP(+). In terms of biological role, catalyzes the folate-dependent formation of 5-methyl-uridine at position 54 (M-5-U54) in all tRNAs. The chain is Methylenetetrahydrofolate--tRNA-(uracil-5-)-methyltransferase TrmFO from Streptococcus pneumoniae (strain Taiwan19F-14).